The primary structure comprises 603 residues: Mitochondrial distribution and morphology protein 34 (603 aa).

The region spanning 1-205 (MAFNFNWSPL…SPEYQEIETE (205 aa)) is the SMP-LTD domain. Low complexity predominate over residues 320–332 (KSGASSVASGSTG). 2 disordered regions span residues 320-511 (KSGA…PLLR) and 558-603 (IARK…AYVA). Residues 333–351 (NETLSSRPTLASSYSTSAG) are compositionally biased toward polar residues. The segment covering 371 to 380 (VVDLRRKDGA) has biased composition (basic and acidic residues). Over residues 383–403 (GVSTEANTPLPSTQVSDTSSV) the composition is skewed to polar residues. The segment covering 452 to 463 (PLLAPAPLIPNA) has biased composition (low complexity). Over residues 500 to 509 (RQAQQSTSPL) the composition is skewed to polar residues. The segment covering 558-570 (IARKVQEEKDKSS) has biased composition (basic and acidic residues).

The protein belongs to the MDM34 family. As to quaternary structure, component of the ER-mitochondria encounter structure (ERMES) or MDM complex, composed of mmm1, mdm10, mdm12 and mdm34.

The protein resides in the mitochondrion outer membrane. Component of the ERMES/MDM complex, which serves as a molecular tether to connect the endoplasmic reticulum (ER) and mitochondria. Components of this complex are involved in the control of mitochondrial shape and protein biogenesis, and function in nonvesicular lipid trafficking between the ER and mitochondria. Mdm34 is required for the interaction of the ER-resident membrane protein mmm1 and the outer mitochondrial membrane-resident beta-barrel protein mdm10. The polypeptide is Mitochondrial distribution and morphology protein 34 (Pyrenophora tritici-repentis (strain Pt-1C-BFP) (Wheat tan spot fungus)).